We begin with the raw amino-acid sequence, 245 residues long: Biosynthetic peptidoglycan transglycosylase (245 aa).

Residues 29–49 (IVLAVLIVLILPYALIVFYLL) form a helical membrane-spanning segment.

Belongs to the glycosyltransferase 51 family.

The protein localises to the cell inner membrane. The enzyme catalyses [GlcNAc-(1-&gt;4)-Mur2Ac(oyl-L-Ala-gamma-D-Glu-L-Lys-D-Ala-D-Ala)](n)-di-trans,octa-cis-undecaprenyl diphosphate + beta-D-GlcNAc-(1-&gt;4)-Mur2Ac(oyl-L-Ala-gamma-D-Glu-L-Lys-D-Ala-D-Ala)-di-trans,octa-cis-undecaprenyl diphosphate = [GlcNAc-(1-&gt;4)-Mur2Ac(oyl-L-Ala-gamma-D-Glu-L-Lys-D-Ala-D-Ala)](n+1)-di-trans,octa-cis-undecaprenyl diphosphate + di-trans,octa-cis-undecaprenyl diphosphate + H(+). Its pathway is cell wall biogenesis; peptidoglycan biosynthesis. Peptidoglycan polymerase that catalyzes glycan chain elongation from lipid-linked precursors. This is Biosynthetic peptidoglycan transglycosylase from Rhizobium johnstonii (strain DSM 114642 / LMG 32736 / 3841) (Rhizobium leguminosarum bv. viciae).